Here is a 456-residue protein sequence, read N- to C-terminus: UDP-N-acetylmuramoylalanine--D-glutamate ligase (456 aa).

121–127 (GTNGKTT) is a binding site for ATP.

Belongs to the MurCDEF family.

It localises to the cytoplasm. It catalyses the reaction UDP-N-acetyl-alpha-D-muramoyl-L-alanine + D-glutamate + ATP = UDP-N-acetyl-alpha-D-muramoyl-L-alanyl-D-glutamate + ADP + phosphate + H(+). It participates in cell wall biogenesis; peptidoglycan biosynthesis. Functionally, cell wall formation. Catalyzes the addition of glutamate to the nucleotide precursor UDP-N-acetylmuramoyl-L-alanine (UMA). This Desulfotalea psychrophila (strain LSv54 / DSM 12343) protein is UDP-N-acetylmuramoylalanine--D-glutamate ligase.